The following is a 99-amino-acid chain: Aspartyl/glutamyl-tRNA(Asn/Gln) amidotransferase subunit C (99 aa).

The protein belongs to the GatC family. As to quaternary structure, heterotrimer of A, B and C subunits.

It carries out the reaction L-glutamyl-tRNA(Gln) + L-glutamine + ATP + H2O = L-glutaminyl-tRNA(Gln) + L-glutamate + ADP + phosphate + H(+). It catalyses the reaction L-aspartyl-tRNA(Asn) + L-glutamine + ATP + H2O = L-asparaginyl-tRNA(Asn) + L-glutamate + ADP + phosphate + 2 H(+). Functionally, allows the formation of correctly charged Asn-tRNA(Asn) or Gln-tRNA(Gln) through the transamidation of misacylated Asp-tRNA(Asn) or Glu-tRNA(Gln) in organisms which lack either or both of asparaginyl-tRNA or glutaminyl-tRNA synthetases. The reaction takes place in the presence of glutamine and ATP through an activated phospho-Asp-tRNA(Asn) or phospho-Glu-tRNA(Gln). This chain is Aspartyl/glutamyl-tRNA(Asn/Gln) amidotransferase subunit C, found in Cupriavidus taiwanensis (strain DSM 17343 / BCRC 17206 / CCUG 44338 / CIP 107171 / LMG 19424 / R1) (Ralstonia taiwanensis (strain LMG 19424)).